A 518-amino-acid chain; its full sequence is Serine/threonine-protein kinase UL13 (518 aa).

The disordered stretch occupies residues 1–119 (MDESRRQRPA…QAALTAPPSS (119 aa)). Residues 151–518 (PGARSFGGSG…TNPCARHALS (368 aa)) enclose the Protein kinase domain. ATP contacts are provided by residues 157–165 (GGSGGYGDV) and Lys-176. Asp-277 acts as the Proton acceptor in catalysis.

The protein belongs to the protein kinase superfamily. Ser/Thr protein kinase family. Autophosphorylated.

The protein resides in the virion tegument. Its subcellular location is the host nucleus. It carries out the reaction L-seryl-[protein] + ATP = O-phospho-L-seryl-[protein] + ADP + H(+). It catalyses the reaction L-threonyl-[protein] + ATP = O-phospho-L-threonyl-[protein] + ADP + H(+). In terms of biological role, multifunctional serine/threonine kinase that plays a role in several processes including egress of virus particles from the nucleus, modulation of the actin cytoskeleton and regulation of viral and cellular gene expression. Regulates the nuclear localization of viral envelopment factors UL34 and UL31, by phosphorylating the US3 kinase, indicating a role in nuclear egress. Disrupts host nuclear lamins, including LMNA and LMNB1. Phosphorylates the viral Fc receptor composed of glycoproteins E (gE) and I (gI). Phosphorylation of glycoprotein E (gE) by UL13 alters its subcellular localization, from the host early endosome to the plasma membrane. Participates in the transcriptional regulation of cellular and viral mRNAs mainly by phosphorylating the viral transcriptional regulator ICP22. Additional substrates have been identified, including UL41, UL49 or host EF1D. This Homo sapiens (Human) protein is Serine/threonine-protein kinase UL13.